The primary structure comprises 295 residues: Fructose-bisphosphate aldolase class 1 (295 aa).

The active-site Proton acceptor is the E176. K213 serves as the catalytic Schiff-base intermediate with dihydroxyacetone-P.

Belongs to the class I fructose-bisphosphate aldolase family.

It carries out the reaction beta-D-fructose 1,6-bisphosphate = D-glyceraldehyde 3-phosphate + dihydroxyacetone phosphate. It participates in carbohydrate degradation; glycolysis; D-glyceraldehyde 3-phosphate and glycerone phosphate from D-glucose: step 4/4. The polypeptide is Fructose-bisphosphate aldolase class 1 (Clostridium beijerinckii (strain ATCC 51743 / NCIMB 8052) (Clostridium acetobutylicum)).